The chain runs to 983 residues: MEKSVAETENGDAFLELKKLPTSKSPHRYTKEELLDIKERPYSKQRPSCLSEKYDSDGVWDPEKWHASLYPASGRSSPVESLKKESESDRPSLVRRIADPRERVKEDDLDVVLSPQRRSFGGGCHVTAAVSSRRSGSPLEKDSDGLRLLGGRRIGSGRIISARAFEKDHRLSDKDLRDLRDRDRERDYKDKRFRREFGDSKRVFGERRRNDSYTEEEPEWFSAGPTSQSETIELTGFDDKILEEDHKGRKRTRRRTASVKEGIVECNGGVAEEDEVEVILAQEPSADQEVPRDVILPEQSPGEFDFNEFFNLDKVPCLASMIEDVLGEGSVSASRFSRWFSNPSRSGSRSSSLGSTPHEELERLAGLEQAVLSPGQNSGNYFAPIPSEDHAENKVDILEMLQKAKVDLKPLLSSLSANKEKLKESSHSGVVLSVEEVEAGLKGLKVDQQMKNSTPFMAEHLEETLSAASSNRQLKKDGDMTAFNKLVNTMKASGTLPTQPKVSRNVESHLLAPAEIPGQPVSKNILQELLGQPVQRPASSNLLSGLMGSLEATASLLSQRAPSPPMSQVFRTQAASADYLHPRIPSPIGFPSGPQQLLGDPFQGMRKPMSPVSAQMSQLELQQAALEGLALPHDLAVQTAPFYQPGFSKPQVDRTRDGLRNRQQRMSKSPAPMHGGNSSSPAPAASITSMLSPSFTPTSVIRKMYESREKTKEEMAPGMVVPGDGKEDTQKTSEENLLSSNPIPNTDQDSSTTNPKLSTLQRSSCSTPLSQTSRYTKEQDYRPKTAGRKTPTLASPVPGTPFLRPTHQVPLVPHVPIVRPAHQLHPGLVQRLIAQGVHPQHLPSLLQAGVLPPGIDMAPLQGLSGPLLGQPLYPLVSAASHPLLNPRPGTPLHLAVMQQQLQRSVLHPPGSSSQAAAISVQTPQNVPSRSGMPHMHSQLEHRTSQRSSSPVGLAKWFGSDVLQQPLPSMPTKVISVDELEYRQ.

The disordered stretch occupies residues 1 to 22; it reads MEKSVAETENGDAFLELKKLPT. Ser4 is modified (phosphoserine). The YXXXXLphi motif motif lies at 29-35; that stretch reads YTKEELL. Residues 40 to 99 form a disordered region; the sequence is RPYSKQRPSCLSEKYDSDGVWDPEKWHASLYPASGRSSPVESLKKESESDRPSLVRRIAD. Basic and acidic residues predominate over residues 52-66; sequence EKYDSDGVWDPEKWH. Ser73 and Ser77 each carry phosphoserine. The segment covering 81–99 has biased composition (basic and acidic residues); that stretch reads SLKKESESDRPSLVRRIAD. Residues Ser114, Ser119, Ser135, and Ser137 each carry the phosphoserine modification. Residues 130–160 are interaction with CSDE1; that stretch reads VSSRRSGSPLEKDSDGLRLLGGRRIGSGRII. Positions 194–210 match the Nuclear localization signal motif; that stretch reads RREFGDSKRVFGERRRN. A disordered region spans residues 206-229; it reads ERRRNDSYTEEEPEWFSAGPTSQS. Residues 218–239 form an interaction with DDX6 region; it reads PEWFSAGPTSQSETIELTGFDD. Phosphoserine occurs at positions 300, 344, 352, and 373. A disordered region spans residues 341 to 360; it reads SNPSRSGSRSSSLGSTPHEE. The segment covering 344–355 has biased composition (low complexity); that stretch reads SRSGSRSSSLGS. Lys409 participates in a covalent cross-link: Glycyl lysine isopeptide (Lys-Gly) (interchain with G-Cter in SUMO2). Residue Ser416 is modified to Phosphoserine. Positions 437–446 match the Nuclear export signal motif; that stretch reads VEAGLKGLKV. Residues 447–489 form an interaction with LSM14A region; the sequence is DQQMKNSTPFMAEHLEETLSAASSNRQLKKDGDMTAFNKLVNT. At Lys485 the chain carries N6-acetyllysine. Ser563 and Ser586 each carry phosphoserine. Disordered stretches follow at residues 585–616, 642–693, 708–800, and 906–951; these read PSPIGFPSGPQQLLGDPFQGMRKPMSPVSAQM, FYQP…MLSP, REKT…VPGT, and LHPP…SSPV. A Nuclear export signal motif is present at residues 612-637; the sequence is VSAQMSQLELQQAALEGLALPHDLAV. The segment covering 651–660 has biased composition (basic and acidic residues); sequence QVDRTRDGLR. Position 692 is a phosphoserine (Ser692). Residues 694-712 form an interaction with PATL1 region; the sequence is SFTPTSVIRKMYESREKTK. Residues 724–734 are compositionally biased toward basic and acidic residues; that stretch reads DGKEDTQKTSE. Composition is skewed to polar residues over residues 735 to 774 and 910 to 928; these read ENLLSSNPIPNTDQDSSTTNPKLSTLQRSSCSTPLSQTSR and GSSSQAAAISVQTPQNVPS. 3 positions are modified to phosphoserine: Ser751, Ser919, and Ser949. The interaction with LSM14A stretch occupies residues 938-983; that stretch reads QLEHRTSQRSSSPVGLAKWFGSDVLQQPLPSMPTKVISVDELEYRQ.

Belongs to the 4E-T/EIF4E-T family. In terms of assembly, interacts (via YXXXXLphi motif) with EIF4E. Interacts (via YXXXXLphi motif) with EIF4E2. Interacts with DDX6. Interacts with CSDE1/UNR. Interacts with CNOT1; promoting association with the CCR4-NOT complex. Interacts with LSM14A; promoting EIF4ENIF1 localization to P-bodies. Interacts with PATL1. Interacts with importin beta only in the presence of importin alpha, suggesting a direct interaction with importin alpha. Interacts with APOBEC3G in an RNA-dependent manner. In terms of processing, phosphorylation by MAPK8/JNK1 and or MAPK9/JNK2 in response to oxidative stress promotes P-body assembly. Phosphorylated during meiotic maturation. Highly expressed in developing oocytes.

Its subcellular location is the cytoplasm. The protein resides in the nucleus. It localises to the PML body. It is found in the nucleus speckle. Its function is as follows. EIF4E-binding protein that regulates translation and stability of mRNAs in processing bodies (P-bodies). Plays a key role in P-bodies to coordinate the storage of translationally inactive mRNAs in the cytoplasm and prevent their degradation. Acts as a binding platform for multiple RNA-binding proteins: promotes deadenylation of mRNAs via its interaction with the CCR4-NOT complex, and blocks decapping via interaction with eIF4E (EIF4E and EIF4E2), thereby protecting deadenylated and repressed mRNAs from degradation. Component of a multiprotein complex that sequesters and represses translation of proneurogenic factors during neurogenesis. Promotes miRNA-mediated translational repression. Involved in mRNA translational repression mediated by the miRNA effector TNRC6B by protecting TNRC6B-targeted mRNAs from decapping and subsequent decay. Required for the formation of P-bodies. Also acts as a nucleoplasmic shuttling protein, which mediates the nuclear import of EIF4E and DDX6 by a piggy-back mechanism. The protein is Eukaryotic translation initiation factor 4E transporter of Mus musculus (Mouse).